Consider the following 490-residue polypeptide: ATP synthase subunit beta, chloroplastic (490 aa).

Residue glycine 170 to threonine 177 coordinates ATP.

It belongs to the ATPase alpha/beta chains family. F-type ATPases have 2 components, CF(1) - the catalytic core - and CF(0) - the membrane proton channel. CF(1) has five subunits: alpha(3), beta(3), gamma(1), delta(1), epsilon(1). CF(0) has four main subunits: a(1), b(1), b'(1) and c(9-12).

It localises to the plastid. It is found in the chloroplast thylakoid membrane. The enzyme catalyses ATP + H2O + 4 H(+)(in) = ADP + phosphate + 5 H(+)(out). Functionally, produces ATP from ADP in the presence of a proton gradient across the membrane. The catalytic sites are hosted primarily by the beta subunits. The polypeptide is ATP synthase subunit beta, chloroplastic (Pinus koraiensis (Korean pine)).